A 100-amino-acid chain; its full sequence is Small ribosomal subunit protein uS14c (100 aa).

Belongs to the universal ribosomal protein uS14 family. As to quaternary structure, part of the 30S ribosomal subunit.

The protein resides in the plastid. It localises to the chloroplast. Its function is as follows. Binds 16S rRNA, required for the assembly of 30S particles. This is Small ribosomal subunit protein uS14c from Chloranthus spicatus (Chulantree).